The sequence spans 145 residues: Aminoglycoside N(6')-acetyltransferase type 1 (145 aa).

The 145-residue stretch at 1–145 (MNIKPASEAS…KVVYFSKKID (145 aa)) folds into the N-acetyltransferase domain. The substrate site is built by tryptophan 22, tyrosine 65, and glutamate 78. 80-82 (IYV) serves as a coordination point for acetyl-CoA. Position 114 (aspartate 114) interacts with substrate. Asparagine 119 provides a ligand contact to acetyl-CoA. Position 135 (glutamate 135) interacts with substrate.

As to quaternary structure, homodimer.

The enzyme catalyses kanamycin B + acetyl-CoA = N(6')-acetylkanamycin B + CoA + H(+). Functionally, catalyzes the transfer of an acetyl group from acetyl-CoA to the 6'-amino group of aminoglycoside molecules conferring resistance to antibiotics containing the purpurosamine ring including amikacin, kanamycin, tobramycin and netilmicin. This chain is Aminoglycoside N(6')-acetyltransferase type 1, found in Acinetobacter haemolyticus.